The following is a 146-amino-acid chain: Hemoglobin subunit beta (146 aa).

The residue at position 1 (Val-1) is an N-acetylvaline. The region spanning 2–146 (HLTAEEKAAV…VANALAHKYH (145 aa)) is the Globin domain. The residue at position 12 (Thr-12) is a Phosphothreonine. At Ser-44 the chain carries Phosphoserine. Lys-59 carries the N6-acetyllysine modification. His-63 contacts heme b. An N6-acetyllysine modification is found at Lys-82. Residue His-92 coordinates heme b. Residue Cys-93 is modified to S-nitrosocysteine. Lys-144 is modified (N6-acetyllysine).

This sequence belongs to the globin family. Heterotetramer of two alpha chains and two beta chains. Red blood cells.

Its function is as follows. Involved in oxygen transport from the lung to the various peripheral tissues. This chain is Hemoglobin subunit beta (HBB), found in Mellivora capensis (Ratel).